A 193-amino-acid chain; its full sequence is Acyl carrier protein phosphodiesterase (193 aa).

The protein belongs to the AcpH family.

It carries out the reaction holo-[ACP] + H2O = apo-[ACP] + (R)-4'-phosphopantetheine + H(+). In terms of biological role, converts holo-ACP to apo-ACP by hydrolytic cleavage of the phosphopantetheine prosthetic group from ACP. This is Acyl carrier protein phosphodiesterase from Salmonella dublin (strain CT_02021853).